We begin with the raw amino-acid sequence, 692 residues long: Transforming growth factor beta activator LRRC33 (692 aa).

An N-terminal signal peptide occupies residues 1–18; sequence MELLPLWLCLGFHFLTVG. The Extracellular portion of the chain corresponds to 19 to 650; sequence WRNRSGTATA…CKWERLDLGL (632 aa). Asparagine 21 carries an N-linked (GlcNAc...) asparagine glycan. The LRRNT domain occupies 29-56; it reads ASQGVCKLVGGAADCRGQSLASVPSSLP. LRR repeat units lie at residues 58–79, 82–103, 106–127, 133–155, 158–179, 182–203, 206–227, 228–239, 251–272, and 273–294; these read HARMLTLDANPLKTLWNHSLQP, LLESLSLHSCHLERISRGAFQE, HLRSLVLGDNCLSENYEETAAA, GLRRLDLSGNALTEDMAALMLQN, SLRSVSLAGNTIMRLDDSVFEG, RLRELDLQRNYIFEIEGGAFDG, ELRHLNLAFNNLPCIVDFGLTR, LRVLNVSYNVLE, ELETLDLSHNQLLFFPLLPQYS, and KLRTLLLRDNNMGFYRDLYNTS. Asparagine 74 carries N-linked (GlcNAc...) asparagine glycosylation. Residue asparagine 155 is glycosylated (N-linked (GlcNAc...) asparagine). N-linked (GlcNAc...) asparagine glycosylation occurs at asparagine 232. N-linked (GlcNAc...) asparagine glycans are attached at residues asparagine 292, asparagine 309, and asparagine 312. LRR repeat units lie at residues 329 to 350, 353 to 374, 377 to 398, 403 to 424, 427 to 447, 463 to 484, 486 to 507, 512 to 534, 537 to 558, 559 to 580, and 585 to 594; these read DLRFLDMSQNQFQYLPDGFLRK, SLSHLNLHQNCLMTLHIREHEP, ALTELDLSHNQLSELHLAPGLA, SLRLFNLSSNQLLGVPPGLFAN, NITTLDMSHNQISLCPLPAAS, SLRSLSLEGCGLGALPDCPFQG, SLTYLDLSSNWGVLNGSLAPLQ, MLQVLSLRNMGLHSSFMALDFSG, NLRDLDLSGNCLTTFPRFGGSL, ALETLDLRRNSLTALPQKAVSE, and GLRTIYLSQN. N-linked (GlcNAc...) asparagine glycosylation is found at asparagine 408 and asparagine 427. Residue asparagine 500 is glycosylated (N-linked (GlcNAc...) asparagine). Positions 595–643 constitute an LRRCT domain; sequence PYDCCGVDGWGALQHGQTVADWAMVTCNLSSKIIRVTELPGGVPRDCKW. N-linked (GlcNAc...) asparagine glycosylation is present at asparagine 622. A helical transmembrane segment spans residues 651-671; it reads LYLVLILPSCLTLLVACTVIV. Topologically, residues 672–692 are cytoplasmic; the sequence is LTFKKPLLQVIKSRCHWSSVY.

It belongs to the LRRC32/LRRC33 family. In terms of assembly, interacts with TGFB1; associates via disulfide bonds with the Latency-associated peptide chain (LAP) regulatory chain of TGFB1, leading to regulate activation of TGF-beta-1. Interacts (via LRR repeats) with TLR2, TLR3, TLR4, TLR9 and probably other Toll-like receptors. Interacts with CYBB/NOX2; the interaction is direct. As to expression, mainly expressed in cells of hematopoietic origin. Highly expressed in bone marrow, thymus, liver, lung, intestine and spleen. In the brain, highly expressed in microglia.

The protein resides in the cell membrane. It localises to the endoplasmic reticulum membrane. Its function is as follows. Key regulator of transforming growth factor beta-1 (TGFB1) specifically required for microglia function in the nervous system. Required for activation of latent TGF-beta-1 in macrophages and microglia: associates specifically via disulfide bonds with the Latency-associated peptide (LAP), which is the regulatory chain of TGFB1, and regulates integrin-dependent activation of TGF-beta-1. TGF-beta-1 activation mediated by LRRC33/NRROS is highly localized: there is little spreading of TGF-beta-1 activated from one microglial cell to neighboring microglia, suggesting the existence of localized and selective activation of TGF-beta-1 by LRRC33/NRROS. Indirectly plays a role in Toll-like receptor (TLR) signaling: ability to inhibit TLR-mediated NF-kappa-B activation and cytokine production is probably a consequence of its role in TGF-beta-1 signaling. The protein is Transforming growth factor beta activator LRRC33 of Homo sapiens (Human).